Consider the following 764-residue polypeptide: PFL-like enzyme TdcE (764 aa).

Residues 7–629 enclose the PFL domain; it reads TSDKLYADAW…KTGNTPDGRR (623 aa). C423 acts as the S-acetylcysteine intermediate in catalysis. C424 (cysteine radical intermediate) is an active-site residue. The segment at 622-645 is disordered; it reads GNTPDGRRAGTPFAPGANPMHGRD. The Glycine radical domain maps to 636-764; that stretch reads PGANPMHGRD…VISRTFTQAL (129 aa). Residue G739 is modified to Glycine radical.

It belongs to the glycyl radical enzyme (GRE) family. PFL subfamily.

Its subcellular location is the cytoplasm. It catalyses the reaction 2-oxobutanoate + CoA = propanoyl-CoA + formate. The catalysed reaction is formate + acetyl-CoA = pyruvate + CoA. It participates in amino-acid degradation; L-threonine degradation via propanoate pathway; propanoate from L-threonine: step 2/4. Its activity is regulated as follows. Dependent on PFL-activase. Its function is as follows. Catalyzes the cleavage of 2-ketobutyrate to propionyl-CoA and formate. It can also use pyruvate as substrate. The protein is PFL-like enzyme TdcE (tdcE) of Escherichia coli (strain K12).